The chain runs to 92 residues: UPF0235 protein PYRAB05010 (92 aa).

The protein belongs to the UPF0235 family.

The protein is UPF0235 protein PYRAB05010 of Pyrococcus abyssi (strain GE5 / Orsay).